The primary structure comprises 400 residues: MLSGLMNFLNACLWPRSDQQARSASDSGGRQEGLLWFRDSGQHVFGDFSMAVVQANSLLEDQSQLESGSLSSHDSGPFGTFVGVYDGHGGPETSRFINDHMFHHLKRFTAEQQCMSSEVIKKAFQATEEGFLSIVTNQFQTRPQIATVGSCCLVSVICDGKLYVANAGDSRAVLGQVMRVTGEAHATQLSAEHNASIESVRRELQALHPDHPDIVVLKHNVWRVKGIIQVSRSIGDVYLKRSEFNREPLYAKFRLRSPFSKPLLSAEPAITVHTLEPHDQFIICASDGLWEHMSNQEAVDIVQNHPRNGIAKRLVKVALQEAAKKREMRYSDLKKIDRGVRRHFHDDITVIVVFFDTNLVSRGSMLRGPAVSVRGAGVNLPHNTLAPCTTPTQAAAAGAS.

The 309-residue stretch at 47 to 355 folds into the PPM-type phosphatase domain; sequence DFSMAVVQAN…DDITVIVVFF (309 aa). Phosphoserine is present on Ser75. Residues Asp86, Gly87, Asp287, and Asp346 each coordinate Mn(2+).

The protein belongs to the PP2C family. As to quaternary structure, interacts with SAUR19. Requires Mg(2+) as cofactor. Mn(2+) serves as cofactor.

The enzyme catalyses O-phospho-L-seryl-[protein] + H2O = L-seryl-[protein] + phosphate. It carries out the reaction O-phospho-L-threonyl-[protein] + H2O = L-threonyl-[protein] + phosphate. Functionally, dephosphorylates and represses plasma membrane H(+)-ATPases (PM H(+)-ATPases, e.g. AHA1 and AHA2), thus influencing negatively plant growth and fitness. The polypeptide is Probable protein phosphatase 2C 64 (Arabidopsis thaliana (Mouse-ear cress)).